A 591-amino-acid polypeptide reads, in one-letter code: Aspartate--tRNA ligase (591 aa).

Glutamate 172 provides a ligand contact to L-aspartate. Residues 196–199 (QLFK) are aspartate. Position 218 (arginine 218) interacts with L-aspartate. Residues 218–220 (RDE) and glutamine 227 each bind ATP. Residue histidine 449 participates in L-aspartate binding. Glutamate 483 provides a ligand contact to ATP. Residue arginine 490 participates in L-aspartate binding. ATP is bound at residue 535–538 (GLDR).

This sequence belongs to the class-II aminoacyl-tRNA synthetase family. Type 1 subfamily. Homodimer.

Its subcellular location is the cytoplasm. It catalyses the reaction tRNA(Asp) + L-aspartate + ATP = L-aspartyl-tRNA(Asp) + AMP + diphosphate. Functionally, catalyzes the attachment of L-aspartate to tRNA(Asp) in a two-step reaction: L-aspartate is first activated by ATP to form Asp-AMP and then transferred to the acceptor end of tRNA(Asp). This is Aspartate--tRNA ligase from Actinobacillus pleuropneumoniae serotype 7 (strain AP76).